The following is a 311-amino-acid chain: Probable manganese-dependent inorganic pyrophosphatase (311 aa).

6 residues coordinate Mn(2+): histidine 9, aspartate 13, aspartate 15, aspartate 75, histidine 97, and aspartate 149.

It belongs to the PPase class C family. Mn(2+) serves as cofactor.

It is found in the cytoplasm. It catalyses the reaction diphosphate + H2O = 2 phosphate + H(+). This Lactobacillus acidophilus (strain ATCC 700396 / NCK56 / N2 / NCFM) protein is Probable manganese-dependent inorganic pyrophosphatase.